The chain runs to 134 residues: Large-conductance mechanosensitive channel (134 aa).

The next 2 helical transmembrane spans lie at 16 to 36 and 76 to 96; these read VVDM…VSSF and GVFL…FIAV.

Belongs to the MscL family. In terms of assembly, homopentamer.

It localises to the cell inner membrane. Its function is as follows. Channel that opens in response to stretch forces in the membrane lipid bilayer. May participate in the regulation of osmotic pressure changes within the cell. The sequence is that of Large-conductance mechanosensitive channel from Thioalkalivibrio sulfidiphilus (strain HL-EbGR7).